We begin with the raw amino-acid sequence, 205 residues long: MKRNKTSKAWMHEHLNDTYVQRANAEGYRARAAYKLMEIDERDRLLRPGRVVVDLGAAPGSWCQVARQRVGSDGRVLALDILPMDPVPGVDFLQGDFTEDAVLAELESRLAGAAVDLVLSDMAPNLSGVATVDQARSIYLCELALDFARRHLKPGGQFLVKVFQGEGFMGFRKAMDEVFLSVQVRKPKASRDRSAEVYLLGVDLR.

5 residues coordinate S-adenosyl-L-methionine: glycine 60, tryptophan 62, aspartate 80, aspartate 96, and aspartate 121. Catalysis depends on lysine 161, which acts as the Proton acceptor.

It belongs to the class I-like SAM-binding methyltransferase superfamily. RNA methyltransferase RlmE family.

Its subcellular location is the cytoplasm. It catalyses the reaction uridine(2552) in 23S rRNA + S-adenosyl-L-methionine = 2'-O-methyluridine(2552) in 23S rRNA + S-adenosyl-L-homocysteine + H(+). Specifically methylates the uridine in position 2552 of 23S rRNA at the 2'-O position of the ribose in the fully assembled 50S ribosomal subunit. In Azoarcus sp. (strain BH72), this protein is Ribosomal RNA large subunit methyltransferase E.